An 889-amino-acid polypeptide reads, in one-letter code: Protein argonaute 15 (889 aa).

2 disordered regions span residues 1-26 and 119-150; these read MESHGDEGEPSAMAKPPKKLPMSRKG and EDASSSGRTTTRRSSGGDDGSPGGSDRKRMKR. Over residues 122-132 the composition is skewed to low complexity; the sequence is SSSGRTTTRRS. A PAZ domain is found at 264 to 379; the sequence is PVIEFLLFNQ…IPLELCHLVP (116 aa). Positions 546 to 853 constitute a Piwi domain; it reads FVLCVLPERK…AAAQVSQFVR (308 aa). The interval 857–878 is disordered; that stretch reads AASEGSGDGGAPPRPVPELPRL.

The protein belongs to the argonaute family. Ago subfamily.

Functionally, probably involved in the RNA silencing pathway. May bind to short RNAs such as microRNAs (miRNAs) or short interfering RNAs (siRNAs), and represses the translation of mRNAs which are complementary to them. The sequence is that of Protein argonaute 15 (AGO15) from Oryza sativa subsp. japonica (Rice).